The primary structure comprises 78 residues: Sec-independent protein translocase protein TatA (78 aa).

The chain crosses the membrane as a helical span at residues 1-21; the sequence is MGSLSIWHWIVVVAVILLLFG. Residues 43–55 are compositionally biased toward basic and acidic residues; the sequence is MKDDEKTAEKPEP. Positions 43 to 78 are disordered; sequence MKDDEKTAEKPEPVKTINHNADGSGAARSDTGSKVI.

Belongs to the TatA/E family. In terms of assembly, the Tat system comprises two distinct complexes: a TatABC complex, containing multiple copies of TatA, TatB and TatC subunits, and a separate TatA complex, containing only TatA subunits. Substrates initially bind to the TatABC complex, which probably triggers association of the separate TatA complex to form the active translocon.

It localises to the cell inner membrane. Functionally, part of the twin-arginine translocation (Tat) system that transports large folded proteins containing a characteristic twin-arginine motif in their signal peptide across membranes. TatA could form the protein-conducting channel of the Tat system. The protein is Sec-independent protein translocase protein TatA of Nitrobacter winogradskyi (strain ATCC 25391 / DSM 10237 / CIP 104748 / NCIMB 11846 / Nb-255).